A 105-amino-acid chain; its full sequence is Large ribosomal subunit protein uL23 (105 aa).

This sequence belongs to the universal ribosomal protein uL23 family. As to quaternary structure, part of the 50S ribosomal subunit. Contacts protein L29, and trigger factor when it is bound to the ribosome.

Its function is as follows. One of the early assembly proteins it binds 23S rRNA. One of the proteins that surrounds the polypeptide exit tunnel on the outside of the ribosome. Forms the main docking site for trigger factor binding to the ribosome. This Janthinobacterium sp. (strain Marseille) (Minibacterium massiliensis) protein is Large ribosomal subunit protein uL23.